The chain runs to 161 residues: uncharacterized protein (161 aa).

Disordered regions lie at residues lysine 47–asparagine 83 and arginine 104–tyrosine 137. The span at lysine 50–asparagine 64 shows a compositional bias: basic residues. Composition is skewed to low complexity over residues asparagine 73–asparagine 83 and serine 115–asparagine 130.

This is an uncharacterized protein from Dictyostelium discoideum (Social amoeba).